Consider the following 312-residue polypeptide: Acetyl-coenzyme A carboxylase carboxyl transferase subunit alpha (312 aa).

Residues 32–286 (LLEERLARLR…KEALLKALEE (255 aa)) enclose the CoA carboxyltransferase C-terminal domain.

This sequence belongs to the AccA family. In terms of assembly, acetyl-CoA carboxylase is a heterohexamer composed of biotin carboxyl carrier protein (AccB), biotin carboxylase (AccC) and two subunits each of ACCase subunit alpha (AccA) and ACCase subunit beta (AccD).

The protein resides in the cytoplasm. It catalyses the reaction N(6)-carboxybiotinyl-L-lysyl-[protein] + acetyl-CoA = N(6)-biotinyl-L-lysyl-[protein] + malonyl-CoA. The protein operates within lipid metabolism; malonyl-CoA biosynthesis; malonyl-CoA from acetyl-CoA: step 1/1. Component of the acetyl coenzyme A carboxylase (ACC) complex. First, biotin carboxylase catalyzes the carboxylation of biotin on its carrier protein (BCCP) and then the CO(2) group is transferred by the carboxyltransferase to acetyl-CoA to form malonyl-CoA. The chain is Acetyl-coenzyme A carboxylase carboxyl transferase subunit alpha from Thermus thermophilus (strain ATCC BAA-163 / DSM 7039 / HB27).